The sequence spans 260 residues: Potassium inward rectifier (Kir)-like channel 3 (260 aa).

The segment at methionine 1–valine 34 is disordered. At methionine 1–arginine 68 the chain is on the cytoplasmic side. The segment covering proline 18–glutamate 31 has biased composition (polar residues). Residues glutamine 69–leucine 89 form a helical membrane-spanning segment. The pore-forming intramembrane region spans aspartate 127–phenylalanine 146. Residues phenylalanine 153–leucine 173 form a helical membrane-spanning segment. The Cytoplasmic segment spans residues alanine 174–valine 260. EF-hand domains follow at residues leucine 190–lysine 225 and glutamate 229–threonine 256. Residues aspartate 203, aspartate 205, aspartate 207, arginine 209, glutamate 214, aspartate 242, serine 246, arginine 248, and aspartate 253 each coordinate Ca(2+).

Belongs to the two pore domain potassium channel (TC 1.A.1.7) family. Homotetramer. In terms of tissue distribution, expressed in hydathodes and the vascular tissues of roots, stems, leaves and flowers.

It is found in the vacuole membrane. Its function is as follows. Probable calcium-activated potassium channel. In Arabidopsis thaliana (Mouse-ear cress), this protein is Potassium inward rectifier (Kir)-like channel 3 (KCO3).